A 441-amino-acid polypeptide reads, in one-letter code: Keratin, type I cytoskeletal 17 (441 aa).

Positions 1–23 are disordered; it reads MTTTIRHFSSGSIKGSSGLAGGS. Residues 1–91 form a head region; sequence MTTTIRHFSS…GGVDGLLVGG (91 aa). The segment covering 9–23 has biased composition (low complexity); sequence SSGSIKGSSGLAGGS. The residue at position 12 (S12) is a Phosphoserine. K14 participates in a covalent cross-link: Glycyl lysine isopeptide (Lys-Gly) (interchain with G-Cter in SUMO1); alternate. K14 is covalently cross-linked (Glycyl lysine isopeptide (Lys-Gly) (interchain with G-Cter in SUMO2); alternate). Phosphoserine occurs at positions 24, 30, 32, and 37. S42 bears the Phosphoserine; by RPS6KA1 mark. Residues 92–128 are coil 1A; it reads EKATMQNLNDRLASYLDKVRALEEANTELELKIRDWY. The 312-residue stretch at 92–403 folds into the IF rod domain; that stretch reads EKATMQNLND…RLLEGEDAHL (312 aa). Position 118 is a phosphothreonine (T118). The interval 129-146 is linker 1; it reads QKQAPGPAPDYSSYFKTI. The segment at 147 to 238 is coil 1B; sequence EDLRNKIHTA…NHEEEMKALR (92 aa). The segment at 239-258 is linker 12; sequence GQVGGEINVEMDAAPGVDLS. The segment at 259–400 is coil 2; that stretch reads RILNEMRDQY…TYRRLLEGED (142 aa). K286 participates in a covalent cross-link: Glycyl lysine isopeptide (Lys-Gly) (interchain with G-Cter in SUMO2). Position 287 is a phosphothreonine (T287). At S331 the chain carries Phosphoserine. Residues 401–441 are tail; it reads AHLTQYKTKEPVTTRQVRTIVEEVQDGRVISSREQVHQTSH. Residues K407 and K409 each participate in a glycyl lysine isopeptide (Lys-Gly) (interchain with G-Cter in SUMO1); alternate cross-link. Residues K407 and K409 each participate in a glycyl lysine isopeptide (Lys-Gly) (interchain with G-Cter in SUMO2); alternate cross-link.

It belongs to the intermediate filament family. As to quaternary structure, heterodimer of a type I and a type II keratin. KRT17 associates with KRT6 isomers (KRT6A or KRT6B). Interacts with TRADD and SFN. Phosphorylation at Ser-42 occurs in a growth- and stress-dependent fashion in skin keratinocytes, it has no effect on filament organization.

The protein resides in the cytoplasm. In terms of biological role, type I keratin involved in the formation and maintenance of various skin appendages, specifically in determining shape and orientation of hair. Required for the correct growth of hair follicles, in particular for the persistence of the anagen (growth) state. Modulates the function of TNF-alpha in the specific context of hair cycling. Regulates protein synthesis and epithelial cell growth through binding to the adapter protein SFN and by stimulating Akt/mTOR pathway. Involved in tissue repair. May be a marker of basal cell differentiation in complex epithelia and therefore indicative of a certain type of epithelial 'stem cells'. Acts as a promoter of epithelial proliferation by acting a regulator of immune response in skin: promotes Th1/Th17-dominated immune environment contributing to the development of basaloid skin tumors. May act as an autoantigen in the immunopathogenesis of psoriasis, with certain peptide regions being a major target for autoreactive T-cells and hence causing their proliferation. The sequence is that of Keratin, type I cytoskeletal 17 from Bos taurus (Bovine).